A 235-amino-acid polypeptide reads, in one-letter code: Glucosamine-6-phosphate deaminase (235 aa).

Asp62 acts as the Proton acceptor; for enolization step in catalysis. The active-site For ring-opening step is the Asn128. Catalysis depends on His130, which acts as the Proton acceptor; for ring-opening step. Catalysis depends on Glu135, which acts as the For ring-opening step.

Belongs to the glucosamine/galactosamine-6-phosphate isomerase family. NagB subfamily.

The catalysed reaction is alpha-D-glucosamine 6-phosphate + H2O = beta-D-fructose 6-phosphate + NH4(+). Its pathway is amino-sugar metabolism; N-acetylneuraminate degradation; D-fructose 6-phosphate from N-acetylneuraminate: step 5/5. Functionally, catalyzes the reversible isomerization-deamination of glucosamine 6-phosphate (GlcN6P) to form fructose 6-phosphate (Fru6P) and ammonium ion. The chain is Glucosamine-6-phosphate deaminase from Streptococcus gordonii (strain Challis / ATCC 35105 / BCRC 15272 / CH1 / DL1 / V288).